Here is a 174-residue protein sequence, read N- to C-terminus: uncharacterized protein (174 aa).

This is an uncharacterized protein from Dictyostelium discoideum (Social amoeba).